Here is a 379-residue protein sequence, read N- to C-terminus: tRNA-specific 2-thiouridylase MnmA (379 aa).

ATP-binding positions include 9-16 (AMSGGVDS) and Met-35. Positions 94 to 96 (NPD) are interaction with target base in tRNA. The active-site Nucleophile is Cys-99. Cys-99 and Cys-195 are joined by a disulfide. Gly-123 contacts ATP. Residues 145-147 (KDQ) form an interaction with tRNA region. Cys-195 acts as the Cysteine persulfide intermediate in catalysis. Residues 307 to 308 (RY) form an interaction with tRNA region.

The protein belongs to the MnmA/TRMU family.

It localises to the cytoplasm. It carries out the reaction S-sulfanyl-L-cysteinyl-[protein] + uridine(34) in tRNA + AH2 + ATP = 2-thiouridine(34) in tRNA + L-cysteinyl-[protein] + A + AMP + diphosphate + H(+). In terms of biological role, catalyzes the 2-thiolation of uridine at the wobble position (U34) of tRNA, leading to the formation of s(2)U34. The polypeptide is tRNA-specific 2-thiouridylase MnmA (Xylella fastidiosa (strain M12)).